A 122-amino-acid chain; its full sequence is Small ribosomal subunit protein bS16 (122 aa).

Residues 81 to 122 form a disordered region; the sequence is GLMKRDAKNNPKKGEPGEKAKERAKERAEKAAAGSTEDAAAE. Residues 83-110 show a composition bias toward basic and acidic residues; that stretch reads MKRDAKNNPKKGEPGEKAKERAKERAEK. Residues 111–122 show a composition bias toward low complexity; it reads AAAGSTEDAAAE.

Belongs to the bacterial ribosomal protein bS16 family.

This Xanthobacter autotrophicus (strain ATCC BAA-1158 / Py2) protein is Small ribosomal subunit protein bS16.